The chain runs to 253 residues: Phosphoadenosine 5'-phosphosulfate reductase (253 aa).

Residue C239 is the Nucleophile; cysteine thiosulfonate intermediate of the active site.

This sequence belongs to the PAPS reductase family. CysH subfamily.

It localises to the cytoplasm. The catalysed reaction is [thioredoxin]-disulfide + sulfite + adenosine 3',5'-bisphosphate + 2 H(+) = [thioredoxin]-dithiol + 3'-phosphoadenylyl sulfate. Its pathway is sulfur metabolism; hydrogen sulfide biosynthesis; sulfite from sulfate: step 3/3. Its function is as follows. Catalyzes the formation of sulfite from phosphoadenosine 5'-phosphosulfate (PAPS) using thioredoxin as an electron donor. This chain is Phosphoadenosine 5'-phosphosulfate reductase, found in Aliivibrio fischeri (strain MJ11) (Vibrio fischeri).